Reading from the N-terminus, the 329-residue chain is Phenylalanine--tRNA ligase alpha subunit (329 aa).

Glu-253 provides a ligand contact to Mg(2+).

It belongs to the class-II aminoacyl-tRNA synthetase family. Phe-tRNA synthetase alpha subunit type 1 subfamily. Tetramer of two alpha and two beta subunits. Mg(2+) serves as cofactor.

Its subcellular location is the cytoplasm. The catalysed reaction is tRNA(Phe) + L-phenylalanine + ATP = L-phenylalanyl-tRNA(Phe) + AMP + diphosphate + H(+). This chain is Phenylalanine--tRNA ligase alpha subunit, found in Teredinibacter turnerae (strain ATCC 39867 / T7901).